We begin with the raw amino-acid sequence, 1463 residues long: Collagen alpha-1(I) chain (1463 aa).

The signal sequence occupies residues 1 to 22 (MFSFVDLRLLLLLAATALLTHG). The propeptide at 23–161 (QEEGQEEGQE…PPGLGGNFAP (139 aa)) is N-terminal propeptide. The VWFC domain maps to 38–96 (VTCVQNGLRYHDRDVWKPVPCQICVCDNGNVLCDDVICDELKDCPNAKVPTDECCPVCP). The tract at residues 98–1217 (GQESPTDQET…AHDGGRYYRA (1120 aa)) is disordered. Positions 138–153 (PGLPGPPGPPGPPGPP) are enriched in pro residues. The residue at position 162 (glutamine 162) is a Pyrrolidone carboxylic acid. A nonhelical region (N-terminal) region spans residues 162–177 (QLSYGYDEKSTGISVP). Lysine 170 is modified (allysine). Serine 171 is subject to Phosphoserine. Residues 178–1191 (GPMGPSGPRG…PGPPGPPGPP (1014 aa)) are triple-helical region. Residues proline 189, proline 192, proline 195, proline 204, proline 207, proline 210, proline 225, proline 240, proline 246, proline 255, and proline 261 each carry the 4-hydroxyproline modification. Residues 197–216 (PQGFQGPPGEPGEPGASGPM) are compositionally biased toward low complexity. Residues 228-242 (NGDDGEAGKPGRPGE) are compositionally biased toward basic and acidic residues. 5-hydroxylysine; alternate is present on lysine 264. O-linked (Gal...) hydroxylysine; alternate glycosylation is present at lysine 264. Serine 270 is subject to Phosphoserine. 5-hydroxylysine occurs at positions 276 and 285. Residues 278–294 (DAGPAGPKGEPGSPGEN) show a composition bias toward low complexity. Proline 288, proline 291, proline 297, proline 306, and proline 312 each carry 4-hydroxyproline. Low complexity predominate over residues 317–330 (PAGARGNDGATGAA). Residues 332–344 (PPGPTGPAGPPGF) are compositionally biased toward pro residues. Proline 333, proline 342, and proline 345 each carry 4-hydroxyproline. Over residues 349 to 358 (GAKGEGGPQG) the composition is skewed to gly residues. 4-hydroxyproline is present on residues proline 372, proline 375, proline 387, proline 393, proline 402, proline 408, proline 411, and proline 426. The segment covering 378–417 (AGAAGPAGNPGADGQPGAKGANGAPGIAGAPGFPGARGPS) has biased composition (low complexity). 5-hydroxylysine is present on lysine 429. 8 positions are modified to 4-hydroxyproline: proline 435, proline 438, proline 450, proline 459, proline 474, proline 480, proline 489, and proline 495. Residues 484 to 493 (GERGGPGSRG) are compositionally biased toward gly residues. Residues 494–525 (FPGADGVAGPKGPAGERGAPGPAGPKGSPGEA) show a composition bias toward low complexity. A 5-hydroxylysine modification is found at lysine 504. A 4-hydroxyproline mark is found at proline 513, proline 522, proline 528, proline 534, proline 543, proline 546, proline 555, proline 564, proline 570, proline 582, proline 591, proline 600, proline 603, proline 621, proline 639, proline 645, proline 651, proline 657, proline 663, proline 669, proline 681, proline 690, proline 702, proline 714, proline 717, proline 723, proline 729, and proline 738. Residues 537-563 (KGLTGSPGSPGPDGKTGPPGPAGQDGR) show a composition bias toward low complexity. The span at 572–591 (ARGQAGVMGFPGPKGAAGEP) shows a compositional bias: low complexity. Low complexity predominate over residues 633-660 (QGPAGSPGFQGLPGPAGPPGEAGKPGEQ). Residues 695 to 723 (PRGANGAPGNDGAKGDAGAPGAPGSQGAP) are compositionally biased toward low complexity. The short motif at 744–746 (RGD) is the Cell attachment site element. 5-hydroxylysine is present on lysine 750. 3 positions are modified to 4-hydroxyproline: proline 756, proline 771, and proline 777. The span at 783–797 (AGPSGPAGPTGARGA) shows a compositional bias: low complexity. A Phosphoserine modification is found at serine 786. 8 positions are modified to 4-hydroxyproline: proline 798, proline 804, proline 807, proline 816, proline 822, proline 840, proline 849, and proline 858. A compositionally biased stretch (low complexity) spans 810-837 (AGFAGPPGADGQPGAKGEPGDAGAKGDA). Positions 839 to 851 (PPGPAGPAGPPGP) are enriched in pro residues. A compositionally biased stretch (low complexity) spans 852–882 (IGNVGAPGPKGARGSAGPPGATGFPGAAGRV). Position 861 is a 5-hydroxylysine (lysine 861). A 4-hydroxyproline mark is found at proline 870 and proline 876. Residue proline 884 is modified to 3-hydroxyproline. 4-hydroxyproline occurs at positions 885, 894, 897, 918, 927, 936, 945, 963, 972, 975, 981, 996, 1002, 1008, 1017, and 1023. Low complexity predominate over residues 930-954 (AGEKGAPGADGPAGAPGTPGPQGIA). Pro residues predominate over residues 995–1005 (PPGPMGPPGLA). Position 1032 is a 5-hydroxylysine (lysine 1032). Residues 1041-1056 (AGPPGAPGAPGAPGPV) show a composition bias toward pro residues. 4-hydroxyproline is present on residues proline 1044, proline 1047, and proline 1050. The span at 1077 to 1091 (IGPVGARGPAGPQGP) shows a compositional bias: low complexity. The Cell attachment site signature appears at 1092 to 1094 (RGD). Residues 1092 to 1106 (RGDKGETGEQGDRGI) show a composition bias toward basic and acidic residues. Lysine 1095 is subject to 5-hydroxylysine. Lysine 1107 is modified (5-hydroxylysine; alternate). Residue lysine 1107 is glycosylated (O-linked (Gal...) hydroxylysine; alternate). 5 positions are modified to 4-hydroxyproline: proline 1119, proline 1122, proline 1125, proline 1143, and proline 1158. Over residues 1125 to 1149 (PGEQGPSGASGPAGPRGPPGSAGSP) the composition is skewed to low complexity. 3-hydroxyproline is present on proline 1163. At proline 1164 the chain carries 4-hydroxyproline. Positions 1176 to 1191 (AGPPGPPGPPGPPGPP) are enriched in pro residues. Position 1178 is a 3-hydroxyproline (proline 1178). At proline 1179 the chain carries 4-hydroxyproline. Proline 1181 bears the 3-hydroxyproline mark. The residue at position 1182 (proline 1182) is a 4-hydroxyproline. 3-hydroxyproline is present on proline 1184. 4-hydroxyproline is present on residues proline 1185, proline 1188, and proline 1191. The tract at residues 1192–1215 (SGGYDLSFLPQPPQEKAHDGGRYY) is nonhelical region (C-terminal). A compositionally biased stretch (basic and acidic residues) spans 1206 to 1217 (EKAHDGGRYYRA). Lysine 1207 is subject to Allysine. The propeptide at 1218 to 1463 (DDANVVRDRD…GFDVGPACFL (246 aa)) is C-terminal propeptide. One can recognise a Fibrillar collagen NC1 domain in the interval 1228 to 1463 (LEVDTTLKSL…GFDVGPACFL (236 aa)). 3 disulfide bridges follow: cysteine 1258/cysteine 1290, cysteine 1298/cysteine 1461, and cysteine 1369/cysteine 1414. The Ca(2+) site is built by aspartate 1276, asparagine 1278, glutamine 1279, cysteine 1281, and aspartate 1284.

Belongs to the fibrillar collagen family. Trimers of one alpha 2(I) and two alpha 1(I) chains. Interacts with MRC2. Interacts with TRAM2. Interacts with MFAP4 in a Ca (2+)-dependent manner. Post-translationally, contains mostly 4-hydroxyproline. Proline residues at the third position of the tripeptide repeating unit (G-X-Y) are hydroxylated in some or all of the chains. Contains 3-hydroxyproline at a few sites. This modification occurs on the first proline residue in the sequence motif Gly-Pro-Hyp, where Hyp is 4-hydroxyproline. In terms of processing, lysine residues at the third position of the tripeptide repeating unit (G-X-Y) are 5-hydroxylated in some or all of the chains. Post-translationally, O-glycosylated on hydroxylated lysine residues. The O-linked glycan consists of a Glc-Gal disaccharide. In terms of tissue distribution, forms the fibrils of tendon, ligaments and bones. In bones the fibrils are mineralized with calcium hydroxyapatite.

Its subcellular location is the secreted. It localises to the extracellular space. It is found in the extracellular matrix. In terms of biological role, type I collagen is a member of group I collagen (fibrillar forming collagen). The sequence is that of Collagen alpha-1(I) chain (COL1A1) from Bos taurus (Bovine).